A 1119-amino-acid chain; its full sequence is Transcriptional repressor NF-X1 homolog (1119 aa).

Positions 1–214 (MADTEGTSSS…EPLTEEETKI (214 aa)) are disordered. The span at 7 to 17 (TSSSIPTSTNS) shows a compositional bias: low complexity. Positions 18–29 (SRHRASRGRGGR) are enriched in basic residues. Over residues 84–98 (ANFTFNPNAATFNPA) the composition is skewed to low complexity. Positions 113-128 (GASTHSNQNSRQQEPS) are enriched in polar residues. Over residues 143–154 (RQLEIQEQRGDS) the composition is skewed to basic and acidic residues. Over residues 157–167 (QNQSRQNNRNQ) the composition is skewed to low complexity. Residues 174–193 (ANQQNKSVQNPSRNPGNSRR) show a composition bias toward polar residues. The segment covering 198 to 214 (RRREQKEEPLTEEETKI) has biased composition (basic and acidic residues). The segment at 235 to 287 (CAICYTRITTRQGVWSCKTCYHIFHISTGCITDWARSSRDKEGANTWRCPTCQ) adopts an RING-type; degenerate zinc-finger fold. 9 consecutive NF-X1-type zinc fingers follow at residues 330–348 (CPHPCTELCHPGPCIECKL), 383–402 (CGQHNCERICHSGDCGECTV), 439–458 (CGIHHCTKKCHDKECGECET), 500–523 (CGTPGKNHHCREKCHEGPCPPCNL), 565–584 (CGMHKCQEVCCIQDEHFCLQ), 592–611 (CGIHTCENVCHAGQCRPCLQ), 649–668 (CDHSVSHKCHGEQNCPPCTQ), 703–726 (CGVHVCQRTCHGEECEKEGEKCTK), and 735–756 (CEHPCALPCHEDSPCEPSPCKA). Positions 867 to 937 (IDFVKSVEKI…KRSIVLTAVR (71 aa)) constitute an R3H domain. Disordered regions lie at residues 1024–1047 (VDSDDEESNVPTTSNLVSSPPKDW) and 1078–1119 (AAKK…ELLE). The span at 1032-1041 (NVPTTSNLVS) shows a compositional bias: polar residues. A compositionally biased stretch (acidic residues) spans 1086 to 1097 (PTWEDQCDEDAP).

Belongs to the NFX1 family.

It localises to the nucleus. Functionally, may play a role in transcription regulation. This Caenorhabditis elegans protein is Transcriptional repressor NF-X1 homolog (nfx-1).